Reading from the N-terminus, the 279-residue chain is H-2 class II histocompatibility antigen gamma chain (279 aa).

The disordered stretch occupies residues 1 to 23 (MDDQRDLISNHEQLPILGNRPRE). Residues 1–29 (MDDQRDLISNHEQLPILGNRPREPERCSR) lie on the Cytoplasmic side of the membrane. Phosphoserine is present on Ser9. Residues 30 to 55 (GALYTGVSVLVALLLAGQATTAYFLY) form a helical; Signal-anchor for type II membrane protein membrane-spanning segment. Over 56 to 279 (QQQGRLDKLT…TRQELGQVTL (224 aa)) the chain is Extracellular. N-linked (GlcNAc...) asparagine glycans are attached at residues Asn113 and Asn119. The 62-residue stretch at 193–254 (LTKCQEEVSH…HTKSRGRHNC (62 aa)) folds into the Thyroglobulin type-1 domain. Cystine bridges form between Cys196/Cys215, Cys226/Cys233, and Cys235/Cys254. The O-linked (Xyl...) (chondroitin sulfate) serine glycan is linked to Ser265.

In terms of assembly, nonamer composed of three alpha/beta/gamma heterotrimers. Interacts with CD44; this complex is essential for the MIF-induced signaling cascade that results in B cell survival. Interacts with the mature form of CTSL; the complex survive in neutral pH environment. In terms of tissue distribution, expressed in thymus and lymph noodes. Expressed by antigen-presenting cells (APCs). Expressed in thymus and lymph noodes.

It localises to the late endosome. The protein localises to the lysosome. It is found in the cell membrane. Its subcellular location is the endoplasmic reticulum membrane. The protein resides in the golgi apparatus. It localises to the trans-Golgi network. The protein localises to the endosome. It is found in the secreted. In terms of biological role, plays a critical role in MHC class II antigen processing by stabilizing peptide-free class II alpha/beta heterodimers in a complex soon after their synthesis and directing transport of the complex from the endoplasmic reticulum to compartments where peptide loading of class II takes place. Enhance also the stimulation of T-cell responses through interaction with CD44. Its function is as follows. Stabilizes the conformation of mature CTSL by binding to its active site and serving as a chaperone to help maintain a pool of mature enzyme in endocytic compartments and extracellular space of antigen-presenting cells (APCs). Binds to the peptide-binding site of MHC class II alpha/beta heterodimers forming an alpha-beta-CLIP complex, thereby preventing the loading of antigenic peptides to the MHC class II complex until its release by HLA-DM in the endosome. The chain is H-2 class II histocompatibility antigen gamma chain from Mus musculus (Mouse).